The primary structure comprises 60 residues: Large ribosomal subunit protein bL32 (60 aa).

This sequence belongs to the bacterial ribosomal protein bL32 family.

The polypeptide is Large ribosomal subunit protein bL32 (Latilactobacillus sakei subsp. sakei (strain 23K) (Lactobacillus sakei subsp. sakei)).